Consider the following 468-residue polypeptide: Probable citrate synthase, mitochondrial (468 aa).

Residues histidine 303, histidine 349, and aspartate 404 contribute to the active site.

This sequence belongs to the citrate synthase family. As to quaternary structure, homodimer.

It is found in the mitochondrion matrix. The enzyme catalyses oxaloacetate + acetyl-CoA + H2O = citrate + CoA + H(+). The protein operates within carbohydrate metabolism; tricarboxylic acid cycle; isocitrate from oxaloacetate: step 1/2. The protein is Probable citrate synthase, mitochondrial (cts-1) of Caenorhabditis elegans.